The following is a 960-amino-acid chain: Isoleucine--tRNA ligase (960 aa).

Positions 60–70 (PYANGSLHIGH) match the 'HIGH' region motif. An L-isoleucyl-5'-AMP-binding site is contributed by Glu-573. The short motif at 614–618 (KMSKS) is the 'KMSKS' region element. Residue Lys-617 participates in ATP binding. The Zn(2+) site is built by Cys-929, Cys-932, Cys-949, and Cys-952.

The protein belongs to the class-I aminoacyl-tRNA synthetase family. IleS type 1 subfamily. Monomer. Requires Zn(2+) as cofactor.

It localises to the cytoplasm. The enzyme catalyses tRNA(Ile) + L-isoleucine + ATP = L-isoleucyl-tRNA(Ile) + AMP + diphosphate. Its function is as follows. Catalyzes the attachment of isoleucine to tRNA(Ile). As IleRS can inadvertently accommodate and process structurally similar amino acids such as valine, to avoid such errors it has two additional distinct tRNA(Ile)-dependent editing activities. One activity is designated as 'pretransfer' editing and involves the hydrolysis of activated Val-AMP. The other activity is designated 'posttransfer' editing and involves deacylation of mischarged Val-tRNA(Ile). This chain is Isoleucine--tRNA ligase, found in Nostoc sp. (strain PCC 7120 / SAG 25.82 / UTEX 2576).